A 238-amino-acid chain; its full sequence is Protein odd-skipped-related 2 (238 aa).

The tract at residues 105–126 (EDPPVTGQSRLSPERRPARGRL) is disordered. C2H2-type zinc fingers lie at residues 134–156 (FICR…ERTH), 162–184 (YTCD…RYIH), and 190–212 (FKCQ…KTLH).

This sequence belongs to the Odd C2H2-type zinc-finger protein family. As to expression, at the 8-somite stage, expressed in the pronephros, with weak generalized expression elsewhere. At 24 hpf, expressed in the kidney tubules and the anterior duct, and also in the gut. At 60 hpf, expressed in the tubules and the pectoral fin buds.

It localises to the nucleus. Its function is as follows. Transcriptional repressor. Required for pronephric kidney development. The polypeptide is Protein odd-skipped-related 2 (Danio rerio (Zebrafish)).